Consider the following 268-residue polypeptide: Small ribosomal subunit protein eS1 (268 aa).

The tract at residues 1–21 is disordered; the sequence is MAVGKNKGLSKGGKKGGKKKV.

It belongs to the eukaryotic ribosomal protein eS1 family. Component of the small ribosomal subunit. Mature ribosomes consist of a small (40S) and a large (60S) subunit. The 40S subunit contains about 33 different proteins and 1 molecule of RNA (18S). The 60S subunit contains about 49 different proteins and 3 molecules of RNA (28S, 5.8S and 5S).

Its subcellular location is the cytoplasm. In terms of biological role, essential for oogenesis; required for late follicle cell development. The sequence is that of Small ribosomal subunit protein eS1 from Drosophila virilis (Fruit fly).